Here is an 87-residue protein sequence, read N- to C-terminus: Small ribosomal subunit protein uS17 (87 aa).

This sequence belongs to the universal ribosomal protein uS17 family. As to quaternary structure, part of the 30S ribosomal subunit.

Functionally, one of the primary rRNA binding proteins, it binds specifically to the 5'-end of 16S ribosomal RNA. The sequence is that of Small ribosomal subunit protein uS17 from Bacillus velezensis (strain DSM 23117 / BGSC 10A6 / LMG 26770 / FZB42) (Bacillus amyloliquefaciens subsp. plantarum).